Consider the following 258-residue polypeptide: Hydroxyacylglutathione hydrolase cytoplasmic (258 aa).

Positions 54 and 56 each coordinate Zn(2+). Positions 58 and 59 each coordinate Fe cation. Zn(2+) is bound by residues histidine 112 and aspartate 135. Aspartate 135 contacts Fe cation. Residues lysine 144–phenylalanine 146 and histidine 174–tyrosine 176 each bind substrate. Fe cation is bound at residue histidine 174.

The protein belongs to the metallo-beta-lactamase superfamily. Glyoxalase II family. In terms of assembly, homodimer. Fe(2+) is required as a cofactor. It depends on Zn(2+) as a cofactor. The cofactor is Fe(3+). In terms of tissue distribution, mainly expressed in flowers and flower buds. Also detected in roots and leaves.

The protein localises to the cytoplasm. It carries out the reaction an S-(2-hydroxyacyl)glutathione + H2O = a 2-hydroxy carboxylate + glutathione + H(+). The protein operates within secondary metabolite metabolism; methylglyoxal degradation; (R)-lactate from methylglyoxal: step 2/2. Functionally, thiolesterase that catalyzes the hydrolysis of S-D-lactoyl-glutathione to form glutathione and D-lactic acid. The polypeptide is Hydroxyacylglutathione hydrolase cytoplasmic (GLX2-2) (Arabidopsis thaliana (Mouse-ear cress)).